A 185-amino-acid polypeptide reads, in one-letter code: MSVNDLRPGTTFIYEGNLFVVIEQSFSKTGRQQGKVSVKAKNLRTGSRVEITFTGGEKVEKAMIERKDMQYLYNDGTDAYLMDTDTYEQIQIPMTRLEWESKFLTDGLMIKMTEYDGEVLGISLPDKVELEVTEAEAAVKGDTTSGALKKAVVETGLDIMVPLFVNVGTKVIISTTDGKYSGRAQ.

Belongs to the elongation factor P family.

The protein resides in the cytoplasm. Its pathway is protein biosynthesis; polypeptide chain elongation. Its function is as follows. Involved in peptide bond synthesis. Stimulates efficient translation and peptide-bond synthesis on native or reconstituted 70S ribosomes in vitro. Probably functions indirectly by altering the affinity of the ribosome for aminoacyl-tRNA, thus increasing their reactivity as acceptors for peptidyl transferase. This Mesoplasma florum (strain ATCC 33453 / NBRC 100688 / NCTC 11704 / L1) (Acholeplasma florum) protein is Elongation factor P.